The following is a 312-amino-acid chain: Acetyl-coenzyme A carboxylase carboxyl transferase subunit alpha (312 aa).

Residues 25–286 (GDDSAVEILK…GNYIIEKLNE (262 aa)) enclose the CoA carboxyltransferase C-terminal domain.

The protein belongs to the AccA family. Acetyl-CoA carboxylase is a heterohexamer composed of biotin carboxyl carrier protein (AccB), biotin carboxylase (AccC) and two subunits each of ACCase subunit alpha (AccA) and ACCase subunit beta (AccD).

It is found in the cytoplasm. It catalyses the reaction N(6)-carboxybiotinyl-L-lysyl-[protein] + acetyl-CoA = N(6)-biotinyl-L-lysyl-[protein] + malonyl-CoA. The protein operates within lipid metabolism; malonyl-CoA biosynthesis; malonyl-CoA from acetyl-CoA: step 1/1. Functionally, component of the acetyl coenzyme A carboxylase (ACC) complex. First, biotin carboxylase catalyzes the carboxylation of biotin on its carrier protein (BCCP) and then the CO(2) group is transferred by the carboxyltransferase to acetyl-CoA to form malonyl-CoA. This chain is Acetyl-coenzyme A carboxylase carboxyl transferase subunit alpha, found in Campylobacter hominis (strain ATCC BAA-381 / DSM 21671 / CCUG 45161 / LMG 19568 / NCTC 13146 / CH001A).